The sequence spans 364 residues: Long-wave-sensitive opsin 1 (364 aa).

At 1-52 the chain is on the extracellular side; sequence MAHTWGPQRLAGGQPQANFEESTQGSIFTYTNSNSTRDPFEGPNYHIAPRWV. Ser-22 carries O-linked (GlcNAc) serine glycosylation. An N-linked (GlcNAc...) asparagine glycan is attached at Asn-34. Residues 53–77 form a helical membrane-spanning segment; it reads YHLTSAWMVFVVIASVFTNGLVLAA. The Cytoplasmic portion of the chain corresponds to 78–89; that stretch reads TMRFKKLRHPLN. Residues 90 to 115 form a helical membrane-spanning segment; sequence WILVNLAIADLAETIIASTISVVNQM. Residues 116 to 129 are Extracellular-facing; the sequence is YGYFVLGHPLCVVE. A disulfide bond links Cys-126 and Cys-203. The helical transmembrane segment at 130-149 threads the bilayer; the sequence is GYTVSLCGITGLWSLAIISW. Topologically, residues 150-168 are cytoplasmic; that stretch reads ERWMVVCKPFGNVRFDAKL. The helical transmembrane segment at 169–192 threads the bilayer; it reads ATAGIAFSWIWAAVWTAPPIFGWS. Over 193-218 the chain is Extracellular; it reads RYWPHGLKTSCGPDVFSGSSYPGVQS. Residues 219–246 form a helical membrane-spanning segment; it reads YMIVLMITCCFIPLSVIILCYLQVWLAI. Residues 247 to 268 are Cytoplasmic-facing; that stretch reads RAVAKQQKESESTQKAEKEVTR. The helical transmembrane segment at 269 to 292 threads the bilayer; that stretch reads MVMVMIFAYCLCWGPYTFFACFAA. Topologically, residues 293–300 are extracellular; that stretch reads AHPGYAFH. Residues 301–325 form a helical membrane-spanning segment; sequence PLVAALPAYFAKSATIYNPIIYVFM. Lys-312 bears the N6-(retinylidene)lysine mark. Residues 326–364 are Cytoplasmic-facing; sequence NRQFRNCILQLFGKKVDDSSELSSVSKTEASSVSSVSPA.

Belongs to the G-protein coupled receptor 1 family. Opsin subfamily. Post-translationally, phosphorylated on some or all of the serine and threonine residues present in the C-terminal region. The three color pigments are found in the cone photoreceptor cells.

It localises to the membrane. Functionally, visual pigments are the light-absorbing molecules that mediate vision. They consist of an apoprotein, opsin, covalently linked to cis-retinal. The chain is Long-wave-sensitive opsin 1 (OPN1LW) from Capra hircus (Goat).